We begin with the raw amino-acid sequence, 219 residues long: Octanoyltransferase (219 aa).

The BPL/LPL catalytic domain occupies 31-206; it reads DEDVDQIWLV…ELVELLGYDQ (176 aa). Substrate is bound by residues 70-77, 137-139, and 150-152; these read RGGQVTYH, SLG, and GLA. The active-site Acyl-thioester intermediate is Cys168.

Belongs to the LipB family.

The protein resides in the cytoplasm. It carries out the reaction octanoyl-[ACP] + L-lysyl-[protein] = N(6)-octanoyl-L-lysyl-[protein] + holo-[ACP] + H(+). The protein operates within protein modification; protein lipoylation via endogenous pathway; protein N(6)-(lipoyl)lysine from octanoyl-[acyl-carrier-protein]: step 1/2. In terms of biological role, catalyzes the transfer of endogenously produced octanoic acid from octanoyl-acyl-carrier-protein onto the lipoyl domains of lipoate-dependent enzymes. Lipoyl-ACP can also act as a substrate although octanoyl-ACP is likely to be the physiological substrate. This is Octanoyltransferase from Vibrio atlanticus (strain LGP32) (Vibrio splendidus (strain Mel32)).